Here is a 346-residue protein sequence, read N- to C-terminus: Guanine nucleotide-binding protein subunit beta-2 (346 aa).

7 WD repeats span residues 57–96, 99–138, 147–185, 188–227, 230–269, 274–313, and 316–346; these read GHINKVNSVHFAGDSRHCVTGSLDGKLIIWDTWTANKVQV, LRSAWVMTVAFSPSGNFVACGGMDNQCTVYDVNNRDASGV, GYEGFLSSCRFLDDTHLITGSGDMKICHWDLEKGVKTMD, GHAGDIAGLSLSPDMNTYITGSVDKTAKLWDVREETHKQM, GHEMDVNSVCYHPSGNGFASASEDQTARLYDIRADQQIAL, QKNTGFTSCALSTSGRYLLCSGIEGNIHSFDTMKVCHNGM, and GHENRITCISLSPNGMCLASTSWDQQVRLWL.

It belongs to the WD repeat G protein beta family. In terms of assembly, g proteins are composed of 3 units, alpha, beta and gamma. Interacts with Ggammae/Guanine nucleotide-binding protein subunit gamma-e.

Its function is as follows. Guanine nucleotide-binding proteins (G proteins) are involved as modulators or transducers in various transmembrane signaling systems. The beta and gamma chains are required for the GTPase activity, for replacement of GDP by GTP, and for G protein-effector interaction. This chain is Guanine nucleotide-binding protein subunit beta-2, found in Calliphora vicina (Blue blowfly).